The sequence spans 213 residues: Octanoyltransferase (213 aa).

The BPL/LPL catalytic domain occupies 32 to 207 (DSTLDEIWLV…NILALLNNPD (176 aa)). Substrate contacts are provided by residues 71–78 (RGGQVTYH), 138–140 (SLG), and 151–153 (GLA). The Acyl-thioester intermediate role is filled by Cys169.

This sequence belongs to the LipB family.

It is found in the cytoplasm. The enzyme catalyses octanoyl-[ACP] + L-lysyl-[protein] = N(6)-octanoyl-L-lysyl-[protein] + holo-[ACP] + H(+). It participates in protein modification; protein lipoylation via endogenous pathway; protein N(6)-(lipoyl)lysine from octanoyl-[acyl-carrier-protein]: step 1/2. Functionally, catalyzes the transfer of endogenously produced octanoic acid from octanoyl-acyl-carrier-protein onto the lipoyl domains of lipoate-dependent enzymes. Lipoyl-ACP can also act as a substrate although octanoyl-ACP is likely to be the physiological substrate. The polypeptide is Octanoyltransferase (Escherichia coli O8 (strain IAI1)).